The chain runs to 303 residues: Putative ankyrin repeat protein R601 (303 aa).

ANK repeat units lie at residues 86–115 (DDNMFLKLAVNYNDEEVLKYLIDSGIDVTV), 117–146 (NNFAVKLQSGIIHNNRIIDLLINNGADITV), 147–176 (DNYFPYRYAASEQNKEALKILFSYNPNVDS), and 200–233 (NADVNINNGAILRENNQYYPVVKSLLAAGADVSY).

This is Putative ankyrin repeat protein R601 from Acanthamoeba polyphaga (Amoeba).